The chain runs to 706 residues: Maternal embryonic leucine zipper kinase (706 aa).

The Protein kinase domain occupies 11–265; that stretch reads YAVHDELGSG…VKKLLEHDWL (255 aa). Residues 17 to 25 and K40 each bind ATP; that span reads LGSGGFGKV. D132 acts as the Proton acceptor in catalysis. 3 disordered regions span residues 366-386, 433-493, and 506-555; these read LDKSGLEDDDSDPSSISSSSD, FTGR…SRGP, and SVYT…IGSA. Composition is skewed to polar residues over residues 447-461 and 506-515; these read SVRSSDSASLGSAAT and SVYTTPNTRP. The 50-residue stretch at 656 to 705 folds into the KA1 domain; the sequence is QETVHGWMTVELEIVRLQMFDKVGIRRKRLKGDAFMYKKVCEKILQMAKI.

The protein belongs to the protein kinase superfamily. CAMK Ser/Thr protein kinase family. SNF1 subfamily. May be phosphorylated at Thr-169 by par-4 and/or autophosphorylated which likely results in its activation. Phosphorylation is not required for co-localization with the centrosome.

The protein resides in the cytoplasm. It is found in the cytoskeleton. The protein localises to the microtubule organizing center. It localises to the centrosome. It catalyses the reaction L-seryl-[protein] + ATP = O-phospho-L-seryl-[protein] + ADP + H(+). The enzyme catalyses L-threonyl-[protein] + ATP = O-phospho-L-threonyl-[protein] + ADP + H(+). Its function is as follows. Serine/threonine-protein kinase involved in cell autonomous neuroblast asymmetric divisions that generate one precursor cell and one apoptotic cell by controlling spindle positioning, myosin distribution and the segregation of cell fate determinants. Plays a role in neural fate specification in several dopaminergic linages, acting in concert with ham-1. Involved in phosphorylation of multiple proteins associated with key developmental processes, including the cell cycle, apoptosis, endocytosis, and asymmetric cell division. Promotes cell shedding during embryogenesis, probably through the endocytosis-mediated removal of cell adhesion molecules such as hmp-1 from the cell surface. May act downstream of par-4/strd-1/mop-25 to regulate cell shedding. This Caenorhabditis elegans protein is Maternal embryonic leucine zipper kinase.